The primary structure comprises 379 residues: Protein FAM53B (379 aa).

Disordered regions lie at residues 206 to 257 (CPAE…HKQR) and 302 to 348 (AQND…AGKE). Residues 212–236 (SPESTPELQRRSGQSGLARSRSQPC) are compositionally biased toward polar residues. Over residues 239–249 (NHQKIGVKRRR) the composition is skewed to basic residues. The Nuclear localization signal motif lies at 246-249 (KRRR). Over residues 326-342 (QSDSSSADALIHQSESS) the composition is skewed to polar residues.

This sequence belongs to the FAM53 family. In terms of assembly, interacts with ctnnb1. In terms of tissue distribution, mainly expressed in proliferating tissues.

It is found in the nucleus. In terms of biological role, acts as a regulator of Wnt signaling pathway by regulating beta-catenin (ctnnb1) nuclear localization. Required for appendage regeneration by regulating cell proliferation. This Danio rerio (Zebrafish) protein is Protein FAM53B.